Here is a 403-residue protein sequence, read N- to C-terminus: Multifunctional CCA protein (403 aa).

ATP is bound by residues Gly8 and Arg11. CTP-binding residues include Gly8 and Arg11. Mg(2+) contacts are provided by Asp21 and Asp23. ATP contacts are provided by Arg91, Arg137, and Arg140. CTP-binding residues include Arg91, Arg137, and Arg140. The HD domain maps to 228–329 (TGIHTLMVAK…LKVLGLLDVW (102 aa)).

The protein belongs to the tRNA nucleotidyltransferase/poly(A) polymerase family. Bacterial CCA-adding enzyme type 1 subfamily. Monomer. Can also form homodimers and oligomers. Requires Mg(2+) as cofactor. The cofactor is Ni(2+).

The catalysed reaction is a tRNA precursor + 2 CTP + ATP = a tRNA with a 3' CCA end + 3 diphosphate. It catalyses the reaction a tRNA with a 3' CCA end + 2 CTP + ATP = a tRNA with a 3' CCACCA end + 3 diphosphate. Catalyzes the addition and repair of the essential 3'-terminal CCA sequence in tRNAs without using a nucleic acid template. Adds these three nucleotides in the order of C, C, and A to the tRNA nucleotide-73, using CTP and ATP as substrates and producing inorganic pyrophosphate. tRNA 3'-terminal CCA addition is required both for tRNA processing and repair. Also involved in tRNA surveillance by mediating tandem CCA addition to generate a CCACCA at the 3' terminus of unstable tRNAs. While stable tRNAs receive only 3'-terminal CCA, unstable tRNAs are marked with CCACCA and rapidly degraded. In Vibrio cholerae serotype O1 (strain ATCC 39541 / Classical Ogawa 395 / O395), this protein is Multifunctional CCA protein.